Reading from the N-terminus, the 292-residue chain is Cytidine deaminase (292 aa).

CMP/dCMP-type deaminase domains are found at residues 47–167 and 186–292; these read TPLK…FGPK and DHQD…YYSL. Residue 88–90 coordinates substrate; it reads NQE. Residue H101 coordinates Zn(2+). Catalysis depends on E103, which acts as the Proton donor. Zn(2+) is bound by residues C128 and C131.

The protein belongs to the cytidine and deoxycytidylate deaminase family. In terms of assembly, homodimer. It depends on Zn(2+) as a cofactor.

It carries out the reaction cytidine + H2O + H(+) = uridine + NH4(+). It catalyses the reaction 2'-deoxycytidine + H2O + H(+) = 2'-deoxyuridine + NH4(+). Functionally, this enzyme scavenges exogenous and endogenous cytidine and 2'-deoxycytidine for UMP synthesis. In Haemophilus influenzae (strain PittEE), this protein is Cytidine deaminase.